The sequence spans 202 residues: Response regulator RamR (202 aa).

The tract at residues 1–121 (MGEMVRIAVV…LITAVHTVAR (121 aa)) is response regulatory. In terms of domain architecture, HTH luxR-type spans 135-200 (LKGAEMPLTT…DAIRIVQSAG (66 aa)). Residues 159–178 (IAEIAARLHLSRGTVRNYMA) constitute a DNA-binding region (H-T-H motif).

As to quaternary structure, homodimer, in the absence of phosphorylation. Post-translationally, may be phosphorylated by an unknown kinase, probably on Asp-56.

Its function is as follows. A transcription factor required for aerial hyphae formation on rich medium. Activates transcription of ramC. Might be part of a two-component regulatory system. Binds the promoter of ramC. Non-phosphorylated protein cooperatively binds multiple sites in the ramC promoter. Has not been seen to autophosphorylate using the small molecule phosphodonors phosphoramidate, acetyl phosphate or carbamoyl phosphate. Upon low expression suppresses the bald (bld, no aerial hyphae) phenotype of citA but not bldJ mutants; higher expression also suppresses the bldJ mutant as well as several other bld mutations, inducing SapB production even on media where SapB is normally not produced. Expression of the ram locus (ramA, ramB and ramR) induces rapid aerial mycelium formation in S.lividans. Overexpression suppresses the no aerial hyphae phenotype of a chaplin-negative strain, probably by inducing expression of SapB. Overexpression of RamR show there are about 280 genes having at least a threefold increase or fourfold decrease in RNA abundance versus wild-type including gene cluster SCO4072-SCO4075. This chain is Response regulator RamR, found in Streptomyces coelicolor (strain ATCC BAA-471 / A3(2) / M145).